A 152-amino-acid polypeptide reads, in one-letter code: Ribosome maturation factor RimP (152 aa).

This sequence belongs to the RimP family.

Its subcellular location is the cytoplasm. In terms of biological role, required for maturation of 30S ribosomal subunits. The polypeptide is Ribosome maturation factor RimP (Porphyromonas gingivalis (strain ATCC 33277 / DSM 20709 / CIP 103683 / JCM 12257 / NCTC 11834 / 2561)).